The chain runs to 595 residues: Inactive serine/threonine-protein kinase PLK5 (595 aa).

Positions 27 to 279 constitute a Protein kinase domain; the sequence is YRRGKLIGKG…LDHLLQDDFF (253 aa). Residues 33–41 and lysine 56 contribute to the ATP site; that span reads IGKGAFSRC. Aspartate 150 functions as the Proton acceptor in the catalytic mechanism. Residues 326 to 350 are disordered; sequence FTSKEASGPGEEGTEPDHMEAGNEE. The segment covering 340 to 350 has biased composition (basic and acidic residues); the sequence is EPDHMEAGNEE. 2 POLO box domains span residues 413–491 and 509–595; these read WAPK…YMQR and DISL…LQSV.

Belongs to the protein kinase superfamily. Ser/Thr protein kinase family. CDC5/Polo subfamily. As to expression, expressed in the cerebellum, eye and brain cortex (at protein level). Expressed in highly differentiated tissues, such as brain, eyes and ovary. Not detectable in proliferating tissues, such as the colon, spleen and placenta.

The protein localises to the nucleus. It localises to the nucleolus. It is found in the cytoplasm. Functionally, inactive serine/threonine-protein kinase that plays a role in cell cycle progression and neuronal differentiation. This Mus musculus (Mouse) protein is Inactive serine/threonine-protein kinase PLK5.